The chain runs to 83 residues: MKKVLALVVAAAMGLSSAAFAAETATPAKTATPAKTTQNTQHHKKQHKKTVEQKAQAAKKHQKKDGKKAPAKSTSKTTSQPAA.

Residues M1–A21 form the signal peptide. Over residues A22–T40 the composition is skewed to low complexity. A propeptide spanning residues A22–Q56 is cleaved from the precursor. Residues A22 to A83 are disordered. Positions A57–P70 are enriched in basic residues. The segment covering A71 to A83 has biased composition (low complexity).

This sequence belongs to the Asr family. In terms of processing, proteolytic processing gives rise to the active protein.

The protein localises to the periplasm. In terms of biological role, required for growth and/or survival at acidic conditions. The sequence is that of Acid shock protein from Salmonella heidelberg (strain SL476).